The primary structure comprises 247 residues: uncharacterized protein (247 aa).

Transmembrane regions (helical) follow at residues 19–39 (IFFT…SIMF), 73–93 (FFTS…AFFI), 106–126 (FLSF…YFII), 155–175 (YIQF…CPLF), 196–216 (YIYF…ILSQ), and 217–237 (FFLF…SCFY).

The protein belongs to the TatC family.

It is found in the mitochondrion membrane. This is an uncharacterized protein from Nephroselmis olivacea (Green alga).